We begin with the raw amino-acid sequence, 279 residues long: Acetylglutamate kinase (279 aa).

Residues 62–63 (GG), Arg84, and Asn177 contribute to the substrate site.

Belongs to the acetylglutamate kinase family. ArgB subfamily.

It localises to the cytoplasm. It carries out the reaction N-acetyl-L-glutamate + ATP = N-acetyl-L-glutamyl 5-phosphate + ADP. It functions in the pathway amino-acid biosynthesis; L-arginine biosynthesis; N(2)-acetyl-L-ornithine from L-glutamate: step 2/4. Functionally, catalyzes the ATP-dependent phosphorylation of N-acetyl-L-glutamate. The sequence is that of Acetylglutamate kinase from Pseudothermotoga lettingae (strain ATCC BAA-301 / DSM 14385 / NBRC 107922 / TMO) (Thermotoga lettingae).